Here is a 62-residue protein sequence, read N- to C-terminus: U-stichotoxin-Hau1a (62 aa).

An N-terminal signal peptide occupies residues 1–21 (MKPAIFLMLFVAMFLISEGEG). Residues 22-31 (FKPKDAPQER) constitute a propeptide that is removed on maturation. Proline 36 bears the Hydroxyproline mark. 2 disulfide bridges follow: cysteine 41–cysteine 53 and cysteine 44–cysteine 59.

This sequence belongs to the Hau1a/HC18/HC19 family.

The protein localises to the secreted. Its subcellular location is the nematocyst. In terms of biological role, toxin that is lethal to crab. Does not produce the typical symptoms associated with sodium channel toxins in crabs, suggesting that it likely does not act on sodium channels. This is U-stichotoxin-Hau1a from Heteractis aurora (Banded sea anemone).